A 257-amino-acid polypeptide reads, in one-letter code: uncharacterized protein (257 aa).

The chain crosses the membrane as a helical span at residues 6 to 26 (IFWLNLAAIIIISIVVSGGMF).

It belongs to the staphylococcal tandem lipoprotein family.

The protein localises to the cell membrane. This is an uncharacterized protein from Staphylococcus aureus (strain Mu50 / ATCC 700699).